Reading from the N-terminus, the 205-residue chain is Holliday junction branch migration complex subunit RuvA (205 aa).

A domain I region spans residues 1 to 64 (MIGKLKGVVD…EDMIRLYGFR (64 aa)). The segment at 65-143 (SDAEREWFRL…AFAPVDPALV (79 aa)) is domain II. The flexible linker stretch occupies residues 144–152 (ALAGAVEEG). A domain III region spans residues 153-205 (AAPQPVADAVSALVNLGYPQVQAAAAIAAALKGAGEGAEAKVLIRLGLRELAR).

Belongs to the RuvA family. In terms of assembly, homotetramer. Forms an RuvA(8)-RuvB(12)-Holliday junction (HJ) complex. HJ DNA is sandwiched between 2 RuvA tetramers; dsDNA enters through RuvA and exits via RuvB. An RuvB hexamer assembles on each DNA strand where it exits the tetramer. Each RuvB hexamer is contacted by two RuvA subunits (via domain III) on 2 adjacent RuvB subunits; this complex drives branch migration. In the full resolvosome a probable DNA-RuvA(4)-RuvB(12)-RuvC(2) complex forms which resolves the HJ.

The protein resides in the cytoplasm. The RuvA-RuvB-RuvC complex processes Holliday junction (HJ) DNA during genetic recombination and DNA repair, while the RuvA-RuvB complex plays an important role in the rescue of blocked DNA replication forks via replication fork reversal (RFR). RuvA specifically binds to HJ cruciform DNA, conferring on it an open structure. The RuvB hexamer acts as an ATP-dependent pump, pulling dsDNA into and through the RuvAB complex. HJ branch migration allows RuvC to scan DNA until it finds its consensus sequence, where it cleaves and resolves the cruciform DNA. The sequence is that of Holliday junction branch migration complex subunit RuvA from Methylobacterium radiotolerans (strain ATCC 27329 / DSM 1819 / JCM 2831 / NBRC 15690 / NCIMB 10815 / 0-1).